We begin with the raw amino-acid sequence, 137 residues long: Putative pre-16S rRNA nuclease (137 aa).

It belongs to the YqgF nuclease family.

Its subcellular location is the cytoplasm. In terms of biological role, could be a nuclease involved in processing of the 5'-end of pre-16S rRNA. This is Putative pre-16S rRNA nuclease from Desulforamulus reducens (strain ATCC BAA-1160 / DSM 100696 / MI-1) (Desulfotomaculum reducens).